The following is a 346-amino-acid chain: NADH-ubiquinone oxidoreductase chain 2 (346 aa).

11 helical membrane passes run 1–21 (MSPY…MLIS), 26–46 (WVFM…ILVW), 60–80 (FIVQ…SLSG), 96–116 (MMIM…YWVV), 122–142 (LNYI…LAVL), 151–171 (SSML…GGLG), 178–198 (LLAF…VAGS), 199–219 (LLGL…FSIL), 242–262 (VLLG…GFFG), 274–294 (LLLG…FYYL), and 320–340 (LSGL…LVGG).

Belongs to the complex I subunit 2 family.

Its subcellular location is the mitochondrion inner membrane. It catalyses the reaction a ubiquinone + NADH + 5 H(+)(in) = a ubiquinol + NAD(+) + 4 H(+)(out). Functionally, core subunit of the mitochondrial membrane respiratory chain NADH dehydrogenase (Complex I) that is believed to belong to the minimal assembly required for catalysis. Complex I functions in the transfer of electrons from NADH to the respiratory chain. The immediate electron acceptor for the enzyme is believed to be ubiquinone. The protein is NADH-ubiquinone oxidoreductase chain 2 (ND2) of Branchiostoma floridae (Florida lancelet).